A 449-amino-acid chain; its full sequence is tRNA-2-methylthio-N(6)-dimethylallyladenosine synthase (449 aa).

The region spanning 4–119 is the MTTase N-terminal domain; the sequence is RTFHIETFGC…APQALDRLVE (116 aa). Residues Cys13, Cys48, Cys82, Cys158, Cys162, and Cys165 each contribute to the [4Fe-4S] cluster site. Positions 144-375 constitute a Radical SAM core domain; sequence GAVPASVFVN…QTLQNRLTER (232 aa). One can recognise a TRAM domain in the interval 378–446; the sequence is QDMVGKKVEV…KHSLLAEQAG (69 aa).

Belongs to the methylthiotransferase family. MiaB subfamily. As to quaternary structure, monomer. It depends on [4Fe-4S] cluster as a cofactor.

It localises to the cytoplasm. The catalysed reaction is N(6)-dimethylallyladenosine(37) in tRNA + (sulfur carrier)-SH + AH2 + 2 S-adenosyl-L-methionine = 2-methylsulfanyl-N(6)-dimethylallyladenosine(37) in tRNA + (sulfur carrier)-H + 5'-deoxyadenosine + L-methionine + A + S-adenosyl-L-homocysteine + 2 H(+). In terms of biological role, catalyzes the methylthiolation of N6-(dimethylallyl)adenosine (i(6)A), leading to the formation of 2-methylthio-N6-(dimethylallyl)adenosine (ms(2)i(6)A) at position 37 in tRNAs that read codons beginning with uridine. In Nitratidesulfovibrio vulgaris (strain DP4) (Desulfovibrio vulgaris), this protein is tRNA-2-methylthio-N(6)-dimethylallyladenosine synthase.